Here is a 334-residue protein sequence, read N- to C-terminus: F420-dependent glucose-6-phosphate dehydrogenase (334 aa).

Aspartate 38 lines the coenzyme F420-(gamma-Glu)n pocket. Residue histidine 39 is the Proton donor of the active site. Coenzyme F420-(gamma-Glu)n-binding positions include threonine 75 and 106-107 (TG). Glutamate 108 serves as the catalytic Proton acceptor. Coenzyme F420-(gamma-Glu)n is bound by residues asparagine 111, 175–176 (GG), and 178–179 (LV). Residues threonine 193, lysine 196, lysine 257, and arginine 281 each contribute to the substrate site.

This sequence belongs to the F420-dependent glucose-6-phosphate dehydrogenase family. Homodimer.

It carries out the reaction oxidized coenzyme F420-(gamma-L-Glu)(n) + D-glucose 6-phosphate + H(+) = 6-phospho-D-glucono-1,5-lactone + reduced coenzyme F420-(gamma-L-Glu)(n). In terms of biological role, catalyzes the coenzyme F420-dependent oxidation of glucose 6-phosphate (G6P) to 6-phosphogluconolactone. The polypeptide is F420-dependent glucose-6-phosphate dehydrogenase (Kribbella flavida (strain DSM 17836 / JCM 10339 / NBRC 14399)).